A 150-amino-acid chain; its full sequence is 3-hydroxyacyl-[acyl-carrier-protein] dehydratase FabZ (150 aa).

The active site involves histidine 56.

It belongs to the thioester dehydratase family. FabZ subfamily.

The protein resides in the cytoplasm. The catalysed reaction is a (3R)-hydroxyacyl-[ACP] = a (2E)-enoyl-[ACP] + H2O. Its function is as follows. Involved in unsaturated fatty acids biosynthesis. Catalyzes the dehydration of short chain beta-hydroxyacyl-ACPs and long chain saturated and unsaturated beta-hydroxyacyl-ACPs. This chain is 3-hydroxyacyl-[acyl-carrier-protein] dehydratase FabZ, found in Desulfotalea psychrophila (strain LSv54 / DSM 12343).